A 526-amino-acid polypeptide reads, in one-letter code: ATP synthase subunit alpha (526 aa).

Residue 174–181 participates in ATP binding; the sequence is GDRKTGKT. The span at 505-520 shows a compositional bias: basic and acidic residues; the sequence is FEPARSEVKVETRPQE. Residues 505-526 form a disordered region; the sequence is FEPARSEVKVETRPQEEEGEEG.

The protein belongs to the ATPase alpha/beta chains family. F-type ATPases have 2 components, CF(1) - the catalytic core - and CF(0) - the membrane proton channel. CF(1) has five subunits: alpha(3), beta(3), gamma(1), delta(1), epsilon(1). CF(0) has three main subunits: a(1), b(2) and c(9-12). The alpha and beta chains form an alternating ring which encloses part of the gamma chain. CF(1) is attached to CF(0) by a central stalk formed by the gamma and epsilon chains, while a peripheral stalk is formed by the delta and b chains.

The protein resides in the cell membrane. The enzyme catalyses ATP + H2O + 4 H(+)(in) = ADP + phosphate + 5 H(+)(out). In terms of biological role, produces ATP from ADP in the presence of a proton gradient across the membrane. The alpha chain is a regulatory subunit. In Rubrobacter xylanophilus (strain DSM 9941 / JCM 11954 / NBRC 16129 / PRD-1), this protein is ATP synthase subunit alpha.